A 240-amino-acid polypeptide reads, in one-letter code: Small ribosomal subunit protein uS3 (240 aa).

The KH type-2 domain occupies 39-107 (IREFIKEECK…ELHLNIVEVR (69 aa)). Residues 212 to 222 (PQARDRRHAEL) show a composition bias toward basic and acidic residues. The segment at 212–240 (PQARDRRHAELQEGGGPRPQGGGRPRRDR) is disordered. The segment covering 224-234 (EGGGPRPQGGG) has biased composition (gly residues).

Belongs to the universal ribosomal protein uS3 family. Part of the 30S ribosomal subunit. Forms a tight complex with proteins S10 and S14.

Functionally, binds the lower part of the 30S subunit head. Binds mRNA in the 70S ribosome, positioning it for translation. The polypeptide is Small ribosomal subunit protein uS3 (Dinoroseobacter shibae (strain DSM 16493 / NCIMB 14021 / DFL 12)).